Consider the following 366-residue polypeptide: 3-isopropylmalate dehydrogenase (366 aa).

78-91 lines the NAD(+) pocket; that stretch reads GPQWTHLKGSESPE. Substrate-binding residues include Arg99, Arg109, Arg138, and Asp227. Residues Asp227, Asp251, and Asp255 each coordinate Mg(2+). Residue 285–297 coordinates NAD(+); that stretch reads GSAPDIAEKNIAN.

The protein belongs to the isocitrate and isopropylmalate dehydrogenases family. LeuB type 1 subfamily. In terms of assembly, homodimer. Mg(2+) serves as cofactor. Mn(2+) is required as a cofactor.

It localises to the cytoplasm. It carries out the reaction (2R,3S)-3-isopropylmalate + NAD(+) = 4-methyl-2-oxopentanoate + CO2 + NADH. It participates in amino-acid biosynthesis; L-leucine biosynthesis; L-leucine from 3-methyl-2-oxobutanoate: step 3/4. Catalyzes the oxidation of 3-carboxy-2-hydroxy-4-methylpentanoate (3-isopropylmalate) to 3-carboxy-4-methyl-2-oxopentanoate. The product decarboxylates to 4-methyl-2 oxopentanoate. In Blochmanniella pennsylvanica (strain BPEN), this protein is 3-isopropylmalate dehydrogenase.